The chain runs to 176 residues: NAD(P)H-quinone oxidoreductase subunit 6, chloroplastic (176 aa).

Transmembrane regions (helical) follow at residues 10–30 (FILV…VLLP), 32–52 (PIYS…LYIL), 61–81 (AQLL…VMFL), 95–115 (VGDG…ITTI), and 152–172 (FLIP…GAIA).

Belongs to the complex I subunit 6 family. As to quaternary structure, NDH is composed of at least 16 different subunits, 5 of which are encoded in the nucleus.

The protein localises to the plastid. It localises to the chloroplast thylakoid membrane. The enzyme catalyses a plastoquinone + NADH + (n+1) H(+)(in) = a plastoquinol + NAD(+) + n H(+)(out). It carries out the reaction a plastoquinone + NADPH + (n+1) H(+)(in) = a plastoquinol + NADP(+) + n H(+)(out). Its function is as follows. NDH shuttles electrons from NAD(P)H:plastoquinone, via FMN and iron-sulfur (Fe-S) centers, to quinones in the photosynthetic chain and possibly in a chloroplast respiratory chain. The immediate electron acceptor for the enzyme in this species is believed to be plastoquinone. Couples the redox reaction to proton translocation, and thus conserves the redox energy in a proton gradient. This chain is NAD(P)H-quinone oxidoreductase subunit 6, chloroplastic (ndhG), found in Trachelium caeruleum (Blue throatwort).